Consider the following 939-residue polypeptide: Tyrosine-protein kinase Shark (939 aa).

One can recognise an SH2 1 domain in the interval 10-106 (WYHGNLSREA…GLPTKLTVPL (97 aa)). 3 ANK repeats span residues 153–185 (DGQTALHLAALHSDEDILKHLLNAKVQVNSSDS), 186–218 (FGCQPLHYAARSKPASFIRTLISAQANVQGRNI), and 220–252 (NGYVPLHEAAKHGNLEAVQELLLAEAPPLPRTS). An SH2 2 domain is found at 288–403 (WYHGTLTREE…GLPVSLKYPV (116 aa)). Disordered stretches follow at residues 410 to 446 (EVPSFATIPRSNMKPKAASPATPPTPVSPHSHHQHPH) and 476 to 505 (ALFDMNSLRKNKSKGKRSDSESSVSGSLAG). The segment covering 496–505 (ESSVSGSLAG) has biased composition (polar residues). The region spanning 662-921 (LVLDREIGHG…PTFVYLTEFF (260 aa)) is the Protein kinase domain. ATP is bound by residues 668–676 (IGHGEFGSV) and Lys-698. Catalysis depends on Asp-789, which acts as the Proton acceptor. Tyr-927 carries the phosphotyrosine modification.

Belongs to the protein kinase superfamily. Tyr protein kinase family. Interacts with drpr; this is required for the recruitment of drpr and glial cells to severed axons and for the phagocytosis of axonal debris by glial cells following axon injury. As to expression, gastrulation embryos show expression in ectodermal cells along the cephalic furrow and ventral midline. Proctodeum, stomodeum and their derived structures (foregut, atrium, pharynx, esophagus and hindgut) continue to show expression from stage 8-9 to late embryos. Other ectodermally derived structures (frontal sac, salivary gland and labium) and developing tracheal system also show expression.

It is found in the cytoplasm. The catalysed reaction is L-tyrosyl-[protein] + ATP = O-phospho-L-tyrosyl-[protein] + ADP + H(+). Functionally, following axon injury, required for recruitment of drpr and glial cells to severed axons and for glial clearance of severed axons from the central nervous system. Together with Src42a and drpr, promotes the migration of macrophages to sites of wounding as part of a signaling cascade where Scr42a detects production of hydrogen peroxide at wound sites which triggers phosphorylation of drpr and subsequent recruitment and activation of shark. May be involved in signal transduction on the apical surface of ectodermal epithelial cells, regulating their polarity during invagination. Crumbs (crb) may be the intracellular signal. This is Tyrosine-protein kinase Shark from Drosophila melanogaster (Fruit fly).